Consider the following 183-residue polypeptide: Ribonuclease H (183 aa).

The RNase H type-1 domain occupies 2–151; sequence SQARFIAFSD…VDQLAQAAAR (150 aa). Positions 11, 57, 79, and 143 each coordinate Mg(2+).

Belongs to the RNase H family. As to quaternary structure, monomer. Requires Mg(2+) as cofactor.

It is found in the cytoplasm. It catalyses the reaction Endonucleolytic cleavage to 5'-phosphomonoester.. In terms of biological role, endonuclease that specifically degrades the RNA of RNA-DNA hybrids. This chain is Ribonuclease H, found in Anaeromyxobacter sp. (strain K).